The chain runs to 320 residues: N-acetylneuraminate lyase (320 aa).

Threonine 51 and threonine 52 together coordinate aceneuramate. The active-site Proton donor is tyrosine 143. Lysine 173 acts as the Schiff-base intermediate with substrate in catalysis. Aceneuramate-binding residues include serine 175, glycine 199, aspartate 201, glutamate 202, and serine 218.

Belongs to the DapA family. NanA subfamily. As to quaternary structure, homotetramer. As to expression, isoform 2 is expressed in placenta, liver, kidney, pancreas, spleen, thymus, ovary, small intestine and peripheral blood leukocyte.

It is found in the cytoplasm. It catalyses the reaction aceneuramate = aldehydo-N-acetyl-D-mannosamine + pyruvate. It participates in amino-sugar metabolism; N-acetylneuraminate degradation. In terms of biological role, catalyzes the cleavage of N-acetylneuraminic acid (sialic acid) to form pyruvate and N-acetylmannosamine via a Schiff base intermediate. It prevents sialic acids from being recycled and returning to the cell surface. Involved in the N-glycolylneuraminic acid (Neu5Gc) degradation pathway. Although human is not able to catalyze formation of Neu5Gc due to the inactive CMAHP enzyme, Neu5Gc is present in food and must be degraded. The polypeptide is N-acetylneuraminate lyase (Homo sapiens (Human)).